Consider the following 252-residue polypeptide: MDSKRDEKILELVKILKNTKYLVFFGGAGTSTDSGVKDFRGKDGLYKTLYKDKYRPEEVLSSDFFYSHRDIFMKYVEKELNIKGLKPNKGHMALVELEKIGILKAVITQNIDDLHQVSGNKNVLELHGSLKRWYCLSCGKTADRNFSCECGGVVRPDVTLYGENLNQSVVNEAIYQLEQADTLIVAGTSLTVYPAAYYLRYFRGKNLIIINDMDTQYDGEASLVIKDNFSYVMDRVVKELKKIQFGKTLKNI.

The Deacetylase sirtuin-type domain maps to Asp2 to Ile243. Positions 28, 32, 39, 40, 109, 111, 112, and 127 each coordinate NAD(+). Residue Phe39 participates in nicotinamide binding. Positions 111 and 112 each coordinate nicotinamide. Residue His127 is the Proton acceptor of the active site. Zn(2+) contacts are provided by Cys135, Cys138, Cys148, and Cys150. NAD(+) is bound by residues Thr188, Ser189, and Asn211.

The protein belongs to the sirtuin family. Class U subfamily. Zn(2+) is required as a cofactor.

It is found in the cytoplasm. The enzyme catalyses N(6)-acetyl-L-lysyl-[protein] + NAD(+) + H2O = 2''-O-acetyl-ADP-D-ribose + nicotinamide + L-lysyl-[protein]. Functionally, NAD-dependent protein deacetylase which modulates the activities of several enzymes which are inactive in their acetylated form. The polypeptide is NAD-dependent protein deacetylase (Fusobacterium nucleatum subsp. nucleatum (strain ATCC 25586 / DSM 15643 / BCRC 10681 / CIP 101130 / JCM 8532 / KCTC 2640 / LMG 13131 / VPI 4355)).